A 671-amino-acid chain; its full sequence is Nucleolar GTP-binding protein 1 (671 aa).

The 182-residue stretch at Arg-169–Leu-350 folds into the OBG-type G domain. GTP-binding positions include Gly-175–Ser-182, Asp-221–Ile-225, and Asn-289–Asp-292. A disordered region spans residues Val-516–Arg-671. Residues Arg-595–Arg-605 are compositionally biased toward polar residues. Basic residues-rich tracts occupy residues Asn-631 to Asn-640 and Arg-654 to Arg-671.

It belongs to the TRAFAC class OBG-HflX-like GTPase superfamily. OBG GTPase family. NOG subfamily.

The protein resides in the nucleus. Its subcellular location is the nucleolus. Involved in the biogenesis of the 60S ribosomal subunit. The protein is Nucleolar GTP-binding protein 1 of Arabidopsis thaliana (Mouse-ear cress).